The sequence spans 279 residues: Thymidylate synthase (279 aa).

133-134 (RR) contacts dUMP. The Nucleophile role is filled by Cys-154. DUMP-binding positions include 178 to 181 (RSND), Asn-189, and 219 to 221 (HIY). Asp-181 is a (6R)-5,10-methylene-5,6,7,8-tetrahydrofolate binding site. Ala-278 lines the (6R)-5,10-methylene-5,6,7,8-tetrahydrofolate pocket.

The protein belongs to the thymidylate synthase family. Bacterial-type ThyA subfamily. Homodimer.

It is found in the cytoplasm. It carries out the reaction dUMP + (6R)-5,10-methylene-5,6,7,8-tetrahydrofolate = 7,8-dihydrofolate + dTMP. It functions in the pathway pyrimidine metabolism; dTTP biosynthesis. Catalyzes the reductive methylation of 2'-deoxyuridine-5'-monophosphate (dUMP) to 2'-deoxythymidine-5'-monophosphate (dTMP) while utilizing 5,10-methylenetetrahydrofolate (mTHF) as the methyl donor and reductant in the reaction, yielding dihydrofolate (DHF) as a by-product. This enzymatic reaction provides an intracellular de novo source of dTMP, an essential precursor for DNA biosynthesis. In Streptococcus suis (strain 05ZYH33), this protein is Thymidylate synthase.